A 363-amino-acid polypeptide reads, in one-letter code: Fructose-bisphosphate aldolase, muscle type (363 aa).

Substrate contacts are provided by Arg56 and Lys147. The active-site Schiff-base intermediate with dihydroxyacetone-P is the Lys230.

Belongs to the class I fructose-bisphosphate aldolase family. In terms of assembly, homotetramer. Expressed mainly in the skeletal muscle, heart muscle, brain, and some other tissues, but probably not in liver.

It catalyses the reaction beta-D-fructose 1,6-bisphosphate = D-glyceraldehyde 3-phosphate + dihydroxyacetone phosphate. It participates in carbohydrate degradation; glycolysis; D-glyceraldehyde 3-phosphate and glycerone phosphate from D-glucose: step 4/4. The polypeptide is Fructose-bisphosphate aldolase, muscle type (Lethenteron camtschaticum (Japanese lamprey)).